Here is a 729-residue protein sequence, read N- to C-terminus: Putative cyclic nucleotide-gated ion channel 19 (729 aa).

Over 1–172 the chain is Cytoplasmic; sequence MAHTRTFTSR…SKFVQVWTRV (172 aa). A disordered region spans residues 52–82; the sequence is SGPIHSTRRTEPLFSPSPQESPDSSSTVDVP. Residues 67-81 are compositionally biased toward low complexity; the sequence is PSPQESPDSSSTVDV. The chain crosses the membrane as a helical span at residues 173 to 193; sequence LAFSSLVAIFIDPLFFFLLLI. At 194-208 the chain is on the extracellular side; that stretch reads QQDNKCIAIDWRATK. Residues 209–229 traverse the membrane as a helical segment; it reads VLVSLRSITDLIFFINILLQF. Residues 230-261 lie on the Cytoplasmic side of the membrane; sequence RLAYVAPESRIVGAGQLVDHPRKIARHYFRGK. A helical membrane pass occupies residues 262-282; sequence FLLDMFIVFPIPQIMILRIIP. Topologically, residues 283–295 are extracellular; that stretch reads LHLGTRREESEKQ. A helical transmembrane segment spans residues 296-316; sequence ILRATVLFQYIPKLYRLLPLL. Residues 317–332 lie on the Cytoplasmic side of the membrane; that stretch reads AGQTSTGFIFESAWAN. Residues 333-353 form a helical membrane-spanning segment; the sequence is FVINLLTFMLAGHAVGSCWYL. Residues 354–451 are Extracellular-facing; that stretch reads SALQRVKKCM…STLAGNLSPS (98 aa). The chain crosses the membrane as a helical span at residues 452 to 472; it reads YSVGEVFFTMGIIGLGLLLFA. The Cytoplasmic portion of the chain corresponds to 473–729; that stretch reads RLIGNMHNFL…LNTAHSNSNR (257 aa). A nucleoside 3',5'-cyclic phosphate is bound by residues 560 to 677 and E625; that span reads IFSL…VTSL. Residues 678-694 form a calmodulin-binding region; that stretch reads FSRFLRSHRVQGAIRYE. The IQ domain occupies 699–728; it reads RLRAAMQIQVAWRYRKRQLQRLNTAHSNSN.

It belongs to the cyclic nucleotide-gated cation channel (TC 1.A.1.5) family. As to quaternary structure, homotetramer or heterotetramer.

The protein localises to the cell membrane. Putative cyclic nucleotide-gated ion channel. This chain is Putative cyclic nucleotide-gated ion channel 19 (CNGC19), found in Arabidopsis thaliana (Mouse-ear cress).